Here is a 243-residue protein sequence, read N- to C-terminus: Uridine-cytidine kinase B (243 aa).

Position 22–29 (22–29 (GGTASGKT)) interacts with ATP.

Belongs to the uridine kinase family.

It catalyses the reaction uridine + ATP = UMP + ADP + H(+). The catalysed reaction is cytidine + ATP = CMP + ADP + H(+). It participates in pyrimidine metabolism; CTP biosynthesis via salvage pathway; CTP from cytidine: step 1/3. Its pathway is pyrimidine metabolism; UMP biosynthesis via salvage pathway; UMP from uridine: step 1/1. Its function is as follows. Catalyzes the conversion of uridine into uridine monophosphate and cytidine into cytidine monophosphate in the pyrimidine salvage pathway. This Dictyostelium discoideum (Social amoeba) protein is Uridine-cytidine kinase B (udkB).